A 482-amino-acid chain; its full sequence is Pancreatic lipase-related protein 2 (482 aa).

An N-terminal signal peptide occupies residues 1–30 (MPMDVRGCLFPSVQMLLCWLVSLLLATVGG). Cysteine 34 and cysteine 40 are disulfide-bonded. Asparagine 92 carries an N-linked (GlcNAc...) asparagine glycan. The tract at residues 106-118 (IHGFIDKGEEGWL) is required for galactolipase activity. An intrachain disulfide couples cysteine 122 to cysteine 133. The Nucleophile role is filled by serine 184. Catalysis depends on aspartate 208, which acts as the Charge relay system. Glutamate 219, arginine 222, aspartate 224, and aspartate 227 together coordinate Ca(2+). Cysteine 269 and cysteine 293 form a disulfide bridge. The tract at residues 270–292 (QKNILSTIVDINGIWEGTRNFAA) is required for galactolipase activity. Residue histidine 295 is the Charge relay system of the active site. 2 disulfides stabilise this stretch: cysteine 317/cysteine 328 and cysteine 331/cysteine 336. N-linked (GlcNAc...) asparagine glycosylation is found at asparagine 366 and asparagine 441. In terms of domain architecture, PLAT spans 370-482 (WRYKVSVTLS…EDVLQSLYPC (113 aa)). A disulfide bridge connects residues cysteine 466 and cysteine 482.

It belongs to the AB hydrolase superfamily. Lipase family. As to expression, expressed in acinar cells of pancreas (at protein level).

The protein resides in the secreted. It localises to the zymogen granule membrane. The protein localises to the cell projection. It is found in the neuron projection. It carries out the reaction a triacylglycerol + H2O = a diacylglycerol + a fatty acid + H(+). It catalyses the reaction a 1,2-diacyl-3-O-(beta-D-galactosyl)-sn-glycerol + 2 H2O = 3-beta-D-galactosyl-sn-glycerol + 2 a fatty acid + 2 H(+). The enzyme catalyses 1,2,3-tri-(9Z-octadecenoyl)-glycerol + H2O = di-(9Z)-octadecenoylglycerol + (9Z)-octadecenoate + H(+). The catalysed reaction is di-(9Z)-octadecenoylglycerol + H2O = (9Z-octadecenoyl)-glycerol + (9Z)-octadecenoate + H(+). It carries out the reaction (9Z-octadecenoyl)-glycerol + H2O = glycerol + (9Z)-octadecenoate + H(+). It catalyses the reaction 1-(9Z-octadecenoyl)-glycerol + H2O = glycerol + (9Z)-octadecenoate + H(+). The enzyme catalyses 1,2,3-tripropanoylglycerol + H2O = dipropanoylglycerol + propanoate + H(+). The catalysed reaction is 1,2,3-tributanoylglycerol + H2O = dibutanoylglycerol + butanoate + H(+). It carries out the reaction 1,2,3-trioctanoylglycerol + H2O = dioctanoylglycerol + octanoate + H(+). It catalyses the reaction 1,2-didecanoylglycerol + H2O = decanoylglycerol + decanoate + H(+). The enzyme catalyses long chain 1,2-diacyl-3-O-beta-D-galactosyl-sn-glycerol + H2O = long chain acyl-3-O-beta-D-galactosyl-sn-glycerol + a fatty acid + H(+). The catalysed reaction is 1,2-dioctanoyl-3-O-beta-D-galactosyl-sn-glycerol + H2O = octanoyl-3-(beta-D-galactosyl)-sn-glycerol + octanoate + H(+). It carries out the reaction 1,2-didodecanoyl-3-beta-D-galactosyl-sn-glycerol + H2O = dodecanoyl-3-beta-D-galactosyl-sn-glycerol + dodecanoate + H(+). It catalyses the reaction 1-beta-D-galactosyl-2,3-didodecanoyl-sn-glycerol + H2O = 1-beta-D-galactosyl-dodecanoyl-sn-glycerol + dodecanoate + H(+). The enzyme catalyses a 1,2-diacyl-3-O-[alpha-D-galactosyl-(1-&gt;6)-beta-D-galactosyl]-sn-glycerol + H2O = acyl-3-O-[alpha-D-galactosyl-(1-&gt;6)-beta-D-galactosyl]-sn-glycerol + a fatty acid + H(+). The catalysed reaction is long chain 1,2-diacyl-3-O-[alpha-D-galactosyl-(1-&gt;6)-beta-D-galactosyl]-sn-glycerol + H2O = long chain acyl-3-O-[alpha-D-galactosyl-(1-&gt;6)-beta-D-galactosyl]-sn-glycerol + a fatty acid + H(+). It carries out the reaction 1,2-dioctanoyl-3-O-[alpha-D-galactosyl-(1-&gt;6)-beta-D-galactosyl]-sn-glycerol + H2O = octanoyl-3-O-[alpha-D-galactosyl-(1-&gt;6)-beta-D-galactosyl]-sn-glycerol + octanoate + H(+). It catalyses the reaction 1,2-didodecanoyl-3-O-[alpha-D-galactosyl-(1-&gt;6)-beta-D-galactosyl]-sn-glycerol + H2O = dodecanoyl-3-O-[alpha-D-galactosyl-(1-&gt;6)-beta-D-galactosyl]-sn-glycerol + dodecanoate + H(+). The enzyme catalyses a 1,2-diacyl-sn-glycero-3-phosphocholine + H2O = a monoacyl-sn-glycero-3-phosphocholine + a fatty acid + H(+). The protein operates within glycerolipid metabolism; triacylglycerol degradation. It functions in the pathway glycolipid metabolism. With respect to regulation, CLPS stimulates triacylglycerol lipase activity. Triacylglycerol lipase activity is not inhibited by increasing bile salt concentration. Lipase that primarily hydrolyzes triglycerides and galactosylglycerides. In neonates, may play a major role in pancreatic digestion of dietary fats such as milk fat globules enriched in long-chain triglycerides. Hydrolyzes short-, medium- and long-chain fatty acyls in triglycerides without apparent positional specificity. Can completely deacylate triacylglycerols. When the liver matures and bile salt synthesis increases, likely functions mainly as a galactolipase and monoacylglycerol lipase. Hydrolyzes monogalactosyldiglycerols (MGDG) and digalactosyldiacylglycerols (DGDG) present in a plant-based diet, releasing long-chain polyunsaturated fatty acids. Hydrolyzes medium- and long-chain fatty acyls in galactolipids. May act together with LIPF to hydrolyze partially digested triglycerides. Hydrolyzes long-chain monoglycerides with high efficiency. In cytotoxic T cells, contributes to perforin-dependent cell lysis, but is unlikely to mediate direct cytotoxicity. Also has low phospholipase activity. In neurons, required for the localization of the phospholipid 1-oleoyl-2-palmitoyl-PC (OPPC) to neurite tips through acyl chain remodeling of membrane phospholipids. The resulting OPPC-rich lipid membrane domain recruits the t-SNARE protein STX4 by selectively interacting with the STX4 transmembrane domain and this promotes surface expression of the dopamine transporter SLC6A3/DAT at neurite tips by facilitating fusion of SLC6A3-containing transport vesicles with the plasma membrane. This Mus musculus (Mouse) protein is Pancreatic lipase-related protein 2.